The primary structure comprises 202 residues: ATP-dependent Clp protease proteolytic subunit (202 aa).

The active-site Nucleophile is the Ser-101. The active site involves His-126.

It belongs to the peptidase S14 family. In terms of assembly, component of the chloroplastic Clp protease core complex.

It localises to the plastid. It is found in the chloroplast stroma. The catalysed reaction is Hydrolysis of proteins to small peptides in the presence of ATP and magnesium. alpha-casein is the usual test substrate. In the absence of ATP, only oligopeptides shorter than five residues are hydrolyzed (such as succinyl-Leu-Tyr-|-NHMec, and Leu-Tyr-Leu-|-Tyr-Trp, in which cleavage of the -Tyr-|-Leu- and -Tyr-|-Trp bonds also occurs).. In terms of biological role, cleaves peptides in various proteins in a process that requires ATP hydrolysis. Has a chymotrypsin-like activity. Plays a major role in the degradation of misfolded proteins. The protein is ATP-dependent Clp protease proteolytic subunit of Acorus gramineus (Dwarf sweet flag).